We begin with the raw amino-acid sequence, 71 residues long: MSTKKTFEENLQDLEAIVTKLETGDVALEDAIAEFQKGMVLSKDLQKTLEDAEKTLVKVMQADGTEMEMDA.

It belongs to the XseB family. In terms of assembly, heterooligomer composed of large and small subunits.

It localises to the cytoplasm. It catalyses the reaction Exonucleolytic cleavage in either 5'- to 3'- or 3'- to 5'-direction to yield nucleoside 5'-phosphates.. Functionally, bidirectionally degrades single-stranded DNA into large acid-insoluble oligonucleotides, which are then degraded further into small acid-soluble oligonucleotides. The protein is Exodeoxyribonuclease 7 small subunit of Streptococcus thermophilus (strain ATCC BAA-250 / LMG 18311).